The primary structure comprises 370 residues: MKLNALQLENYRNYEEVVLDCHPDVNILIGENAQGKTNLLESIYTLALAKSHRTSNDKELIRFNAEYAKIEGELSYRHGKMPLTMFITKKGKKVKVNHLEQHRLTQYVGHLNVVLFAPEDLNIVKGSPQVRRRFIDMELGQISAVYLNDLSQYQRILKQKNNYLKQLQMKQKTDRTMLEVLNQQFAEYALKITLKRVHFINELETLAKPIHSSITDERETLDLEYRPSLKLSEETDEAKLYEEVQKLLQDNMEREIERGVALYGPHRDDLGFKVNEMDAQTYGSQGQQRTTALSIKLAEIELINIEVGEYPILLLDDVLSELDDSRQTHLLSTIQDKVQTFVTTTSVEGIDHEIMKHAKLYRINQGEIIK.

30 to 37 provides a ligand contact to ATP; sequence GENAQGKT.

This sequence belongs to the RecF family.

The protein resides in the cytoplasm. Its function is as follows. The RecF protein is involved in DNA metabolism; it is required for DNA replication and normal SOS inducibility. RecF binds preferentially to single-stranded, linear DNA. It also seems to bind ATP. In Staphylococcus carnosus (strain TM300), this protein is DNA replication and repair protein RecF.